Consider the following 377-residue polypeptide: Tryptophan 2,3-dioxygenase (377 aa).

Residues Phe-57–His-61 and Arg-128 each bind substrate. His-313 serves as a coordination point for heme. Position 328 (Thr-328) interacts with substrate.

It belongs to the tryptophan 2,3-dioxygenase family. Homotetramer. Dimer of dimers. Heme serves as cofactor.

It carries out the reaction L-tryptophan + O2 = N-formyl-L-kynurenine. The protein operates within amino-acid degradation; L-tryptophan degradation via kynurenine pathway; L-kynurenine from L-tryptophan: step 1/2. It functions in the pathway pigment biosynthesis; ommochrome biosynthesis. In terms of biological role, heme-dependent dioxygenase that catalyzes the oxidative cleavage of the L-tryptophan (L-Trp) pyrrole ring and converts L-tryptophan to N-formyl-L-kynurenine. Catalyzes the oxidative cleavage of the indole moiety. The sequence is that of Tryptophan 2,3-dioxygenase from Drosophila grimshawi (Hawaiian fruit fly).